Here is a 578-residue protein sequence, read N- to C-terminus: Tetratricopeptide repeat protein 39A (578 aa).

3 TPR repeats span residues Ala280–Trp313, Cys470–Ile503, and Pro511–Tyr544.

The protein belongs to the TTC39 family.

The sequence is that of Tetratricopeptide repeat protein 39A (Ttc39a) from Mus musculus (Mouse).